We begin with the raw amino-acid sequence, 562 residues long: BOS complex subunit NCLN (562 aa).

Positions 1–41 (MLEEAGEVLESVLKASCLPLSFLLFVPAVLLLLGPPPAAEA) are cleaved as a signal peptide. The Extracellular segment spans residues 42–521 (AHESTVYRMQ…VMNAYRVKPA (480 aa)). A glycan (N-linked (GlcNAc...) asparagine) is linked at Asn240. The disordered stretch occupies residues 420–447 (GFDEGHLQPNREGSTCRSADLHGSDADP). A helical membrane pass occupies residues 522–542 (IFDLLLAVCIAAYLGVAYVAV). Residues 543 to 562 (QNFGLLYRMIQRLSLKTKQQ) lie on the Cytoplasmic side of the membrane.

The protein belongs to the nicastrin family. In terms of assembly, component of the multi-pass translocon (MPT) complex.

Its subcellular location is the endoplasmic reticulum membrane. In terms of biological role, component of the multi-pass translocon (MPT) complex that mediates insertion of multi-pass membrane proteins into the lipid bilayer of membranes. The MPT complex takes over after the SEC61 complex: following membrane insertion of the first few transmembrane segments of proteins by the SEC61 complex, the MPT complex occludes the lateral gate of the SEC61 complex to promote insertion of subsequent transmembrane regions. May antagonize Nodal signaling and subsequent organization of axial structures during mesodermal patterning, via its interaction with NOMO. In Gallus gallus (Chicken), this protein is BOS complex subunit NCLN (NCLN).